We begin with the raw amino-acid sequence, 307 residues long: Homoserine O-acetyltransferase (307 aa).

C142 serves as the catalytic Acyl-thioester intermediate. 2 residues coordinate substrate: K163 and S192. Catalysis depends on H235, which acts as the Proton acceptor. E237 is an active-site residue. R249 provides a ligand contact to substrate.

Belongs to the MetA family.

The protein resides in the cytoplasm. The enzyme catalyses L-homoserine + acetyl-CoA = O-acetyl-L-homoserine + CoA. It functions in the pathway amino-acid biosynthesis; L-methionine biosynthesis via de novo pathway; O-acetyl-L-homoserine from L-homoserine: step 1/1. In terms of biological role, transfers an acetyl group from acetyl-CoA to L-homoserine, forming acetyl-L-homoserine. The polypeptide is Homoserine O-acetyltransferase (Rhizobium leguminosarum bv. trifolii (strain WSM2304)).